Reading from the N-terminus, the 772-residue chain is Ion-translocating oxidoreductase complex subunit C (772 aa).

2 4Fe-4S ferredoxin-type domains span residues Gly369 to Tyr397 and Lys407 to Phe436. [4Fe-4S] cluster contacts are provided by Cys377, Cys380, Cys383, Cys387, Cys416, Cys419, Cys422, and Cys426. Positions Lys599–Lys748 are disordered.

Belongs to the 4Fe4S bacterial-type ferredoxin family. RnfC subfamily. In terms of assembly, the complex is composed of six subunits: RsxA, RsxB, RsxC, RsxD, RsxE and RsxG. [4Fe-4S] cluster serves as cofactor.

Its subcellular location is the cell inner membrane. Its function is as follows. Part of a membrane-bound complex that couples electron transfer with translocation of ions across the membrane. Required to maintain the reduced state of SoxR. The polypeptide is Ion-translocating oxidoreductase complex subunit C (Shigella dysenteriae serotype 1 (strain Sd197)).